The primary structure comprises 276 residues: Pantothenate synthetase (276 aa).

Position 25 to 32 (25 to 32) interacts with ATP; the sequence is MGYLHRGH. The Proton donor role is filled by histidine 32. Glutamine 56 is a binding site for (R)-pantoate. Residue glutamine 56 participates in beta-alanine binding. 143-146 is an ATP binding site; that stretch reads GEKD. Residue glutamine 149 coordinates (R)-pantoate. ATP contacts are provided by residues valine 172 and 180 to 183; that span reads LSSR.

It belongs to the pantothenate synthetase family. As to quaternary structure, homodimer.

Its subcellular location is the cytoplasm. The enzyme catalyses (R)-pantoate + beta-alanine + ATP = (R)-pantothenate + AMP + diphosphate + H(+). The protein operates within cofactor biosynthesis; (R)-pantothenate biosynthesis; (R)-pantothenate from (R)-pantoate and beta-alanine: step 1/1. Catalyzes the condensation of pantoate with beta-alanine in an ATP-dependent reaction via a pantoyl-adenylate intermediate. This Thermus thermophilus (strain ATCC BAA-163 / DSM 7039 / HB27) protein is Pantothenate synthetase.